The sequence spans 440 residues: C4-dicarboxylate transport protein (440 aa).

The next 8 helical transmembrane spans lie at 8 to 28 (LYLQ…LFPA), 40 to 60 (FIKL…VTGI), 74 to 94 (LKGL…GLVV), 147 to 167 (GDIL…AALK), 187 to 207 (IVGF…AFTV), 221 to 241 (LIAC…GLVL), 288 to 308 (VVGL…SIYL), and 354 to 374 (AATL…LLGV). Residues 419-440 (EEVEPANEPEPPAIPAGAGLHG) are disordered.

The protein belongs to the dicarboxylate/amino acid:cation symporter (DAACS) (TC 2.A.23) family.

The protein localises to the cell inner membrane. Functionally, responsible for the transport of dicarboxylates such as succinate, fumarate, and malate from the periplasm across the membrane. In Anaeromyxobacter sp. (strain K), this protein is C4-dicarboxylate transport protein.